The chain runs to 627 residues: MRMLLIHSDYLEYEVKDKALKNPEPISEEQKKGRLEEVLAVFISVEKVDETNPDEVVEKAVNEIKDVASQVKAENVFVYPFAHLSSELAKPDIALEVLREVEEKLREEGFNVKRAPFGYYKAFKLSCKGHPLAELSRTIVPSGEAKAEEEIPEALKKEEEELVSYWYILTPEGELIEVDKFDFTGHENLRKFANYEISKSRIADREPPHVRIMLEQELVDYEPGSDPGNLRYYPKGRLIKGLLEQYVTEKVVEYGAMEVETPIMYDFEHPALEKYLNRFPARQYIVKSGDKKFFLRFAACFGQFLIKKDAIISYRNLPLRMYELTRYSFRREKSGELSGLRRLRAFTMPDMHTVARDLKQAMAEFKKQYKLSMEVLKGVGLTPEDYEVAIRFTEDFWNENRDFIVELAKIIGKPVLIEMWKQRFFYFILKFEFNFVDNLDKAAALSTVQIDVENAERFGITYYDEDGKEKYPLILHCSPSGAIERVMYAILEKQAKLQSKGIKPMFPLWLSPIQVRVIPVSEEVLDYALYVAGKLEGAKIRVDVDDTSDRLNKKIRKAEKEWIPYVIVVGRNEKEQNTITVRRRSDGKQGEMQLEDLIREIRSQTEGFPYKPRPLPLLLSKRPKFRG.

The tract at residues 1 to 147 (MRMLLIHSDY…TIVPSGEAKA (147 aa)) is editing domain. The catalytic stretch occupies residues 208–507 (PHVRIMLEQE…QSKGIKPMFP (300 aa)). Zn(2+)-binding residues include cysteine 300, histidine 352, and histidine 476.

Belongs to the class-II aminoacyl-tRNA synthetase family. Homodimer. Requires Zn(2+) as cofactor.

It is found in the cytoplasm. It carries out the reaction tRNA(Thr) + L-threonine + ATP = L-threonyl-tRNA(Thr) + AMP + diphosphate + H(+). Functionally, catalyzes the attachment of threonine to tRNA(Thr) in a two-step reaction: L-threonine is first activated by ATP to form Thr-AMP and then transferred to the acceptor end of tRNA(Thr). Also edits incorrectly charged L-seryl-tRNA(Thr). The chain is Threonine--tRNA ligase from Thermococcus onnurineus (strain NA1).